Here is a 535-residue protein sequence, read N- to C-terminus: Butyrophilin-like protein 9 (535 aa).

The signal sequence occupies residues 1–34; sequence MVDLSVSPDSLKPVSLTSSLVFLMHLLLLQPGEP. Topologically, residues 35-256 are extracellular; that stretch reads SSEVKVLGPE…VFVPGASAWK (222 aa). The Ig-like V-type domain maps to 54-135; it reads EVEFPCHLWP…SDKGTYGCRF (82 aa). The cysteines at positions 59 and 133 are disulfide-linked. Residues Asn-102, Asn-139, and Asn-224 are each glycosylated (N-linked (GlcNAc...) asparagine). A helical membrane pass occupies residues 257–277; sequence SAFVATLPLLLVLAALALGVL. Residues 276–315 adopt a coiled-coil conformation; the sequence is VLRKQRRSREKLRKQAEKRQEKLTAELEKLQTELDWRRAE. The Cytoplasmic segment spans residues 278-535; the sequence is RKQRRSREKL…EPADPALDWW (258 aa). The B30.2/SPRY domain occupies 310–509; the sequence is DWRRAEGQAE…LTICPLPVRG (200 aa). Residues 340–367 form a disordered region; that stretch reads SLEVSEDGKSVSSRGAPPGPAPGHPQRF.

This sequence belongs to the immunoglobulin superfamily. BTN/MOG family.

The protein localises to the membrane. In Homo sapiens (Human), this protein is Butyrophilin-like protein 9 (BTNL9).